Here is a 621-residue protein sequence, read N- to C-terminus: Na(+)/H(+) antiporter NhaA (621 aa).

The segment at 1 to 430 (MPASSFGESS…LGWLIFKVAA (430 aa)) is na(+)/H(+) antiporter NhaA. A run of 11 helical transmembrane segments spans residues 27–47 (GAAV…NSPL), 72–92 (LHHW…GLEV), 109–129 (LALI…VLIV), 139–159 (GWGA…AIVG), 168–188 (VFLL…IGIV), 192–212 (EIRI…WLLG), 223–243 (VLIV…ASLA), 300–320 (FLRL…NAGV), 339–359 (VIAG…LVAV), 375–395 (VFGG…IIGL), and 409–429 (VGVL…FKVA). Residues 431–578 (QRWGEKTADL…VERDLASAVA (148 aa)) enclose the Thioredoxin domain.

In the N-terminal section; belongs to the NhaA Na(+)/H(+) (TC 2.A.33) antiporter family.

The protein resides in the cell inner membrane. It catalyses the reaction Na(+)(in) + 2 H(+)(out) = Na(+)(out) + 2 H(+)(in). Functionally, na(+)/H(+) antiporter that extrudes sodium in exchange for external protons. The polypeptide is Na(+)/H(+) antiporter NhaA (Herminiimonas arsenicoxydans).